Reading from the N-terminus, the 154-residue chain is Large ribosomal subunit protein uL30 (154 aa).

The protein belongs to the universal ribosomal protein uL30 family. In terms of assembly, part of the 50S ribosomal subunit.

This chain is Large ribosomal subunit protein uL30, found in Methanoregula boonei (strain DSM 21154 / JCM 14090 / 6A8).